The sequence spans 310 residues: Ribosomal RNA small subunit methyltransferase H (310 aa).

S-adenosyl-L-methionine is bound by residues 32-34 (AGH), D51, F78, D99, and Q106. A disordered region spans residues 290 to 310 (GELEDNRRSRSAKLRVAEKQK).

The protein belongs to the methyltransferase superfamily. RsmH family.

Its subcellular location is the cytoplasm. The enzyme catalyses cytidine(1402) in 16S rRNA + S-adenosyl-L-methionine = N(4)-methylcytidine(1402) in 16S rRNA + S-adenosyl-L-homocysteine + H(+). Its function is as follows. Specifically methylates the N4 position of cytidine in position 1402 (C1402) of 16S rRNA. This Exiguobacterium sp. (strain ATCC BAA-1283 / AT1b) protein is Ribosomal RNA small subunit methyltransferase H.